A 150-amino-acid chain; its full sequence is Large ribosomal subunit protein bL9 (150 aa).

It belongs to the bacterial ribosomal protein bL9 family.

Its function is as follows. Binds to the 23S rRNA. The protein is Large ribosomal subunit protein bL9 of Wolinella succinogenes (strain ATCC 29543 / DSM 1740 / CCUG 13145 / JCM 31913 / LMG 7466 / NCTC 11488 / FDC 602W) (Vibrio succinogenes).